The primary structure comprises 183 residues: MLKEIMNTAEDKMSKALLALKKDLASLKAGRANPAMLDKIEAEYYGTMTPLSQLANISVPEARILQIQPWDKSSLKAIEKAILVSDLGLNPNNDGTIIRLIIPELTEETRRNIVKTVKKYGEDTKIAIRSVRRDGNDKIKDLKSDMSEDDIKKAEEEIQKITDNYVKKVDEMIDIKEKEIMSI.

This sequence belongs to the RRF family.

The protein resides in the cytoplasm. Its function is as follows. Responsible for the release of ribosomes from messenger RNA at the termination of protein biosynthesis. May increase the efficiency of translation by recycling ribosomes from one round of translation to another. This chain is Ribosome-recycling factor, found in Clostridium tetani (strain Massachusetts / E88).